A 183-amino-acid chain; its full sequence is Oleosin-B2 (183 aa).

Positions 1-23 (QASIFSRFFRMFSFIFPFVNVIK) are polar. 3 helical membrane-spanning segments follow: residues 24-44 (LIIA…ALGG), 46-66 (AVAL…LVPA), and 72-92 (LLAS…GLIM). Residues 24-95 (LIIASVTSLV…TGIGLIMGLV (72 aa)) are hydrophobic.

It belongs to the oleosin family. The full-length protein is found in the tapetal lipid bodies of immature anthers, the proteolytically cleaved C-terminal product is found on the coats of pollen grains. Not present in seeds.

Its subcellular location is the lipid droplet. It is found in the membrane. Many of the major pollen coat proteins are derived from endoproteolytic cleavage of oleosin-like proteins. In Brassica napus (Rape), this protein is Oleosin-B2 (OlnB2).